The chain runs to 32 residues: Enhancer of rudimentary homolog (32 aa).

The protein belongs to the E(R) family. Homodimer. Component of the methylosome, a 20S complex containing at least CLNS1A/pICln, PRMT5/SKB1, WDR77/MEP50, PRMT1 and ERH. Interacts with CHTOP.

The protein localises to the nucleus. In terms of biological role, may have a role in the cell cycle. Its function is as follows. AP 3910 has antibacterial activity against B.megaterium. This chain is Enhancer of rudimentary homolog (ERH), found in Sus scrofa (Pig).